A 779-amino-acid chain; its full sequence is Acyl-CoA dehydrogenase family member 11 (779 aa).

Lys-163, Lys-166, and Lys-175 each carry N6-acetyllysine. Ser-210 is subject to Phosphoserine. Position 323 is a phosphotyrosine (Tyr-323). An N6-succinyllysine mark is found at Lys-368 and Lys-390. FAD contacts are provided by residues 503–513 (FCMTEPNVSSS), 511–513 (SSS), 537–539 (WSS), and Ser-539. Ser-513 is a binding site for substrate. 628–631 (GPGR) contributes to the substrate binding site. Residues Arg-656, Gln-726, and 726–730 (QVHGG) each bind FAD. Gly-754 provides a ligand contact to substrate. FAD-binding positions include 755–757 (PDE) and Glu-757. N6-acetyllysine is present on Lys-765.

It belongs to the acyl-CoA dehydrogenase family. Homodimer. Requires FAD as cofactor.

The protein resides in the peroxisome. It is found in the mitochondrion membrane. The enzyme catalyses a 2,3-saturated acyl-CoA + oxidized [electron-transfer flavoprotein] + H(+) = a (2E)-enoyl-CoA + reduced [electron-transfer flavoprotein]. It carries out the reaction docosanoyl-CoA + oxidized [electron-transfer flavoprotein] + H(+) = (2E)-docosenoyl-CoA + reduced [electron-transfer flavoprotein]. The catalysed reaction is tetracosanoyl-CoA + oxidized [electron-transfer flavoprotein] + H(+) = (2E)-tetracosenoyl-CoA + reduced [electron-transfer flavoprotein]. It catalyses the reaction eicosanoyl-CoA + oxidized [electron-transfer flavoprotein] + H(+) = (2E)-eicosenoyl-CoA + reduced [electron-transfer flavoprotein]. The enzyme catalyses hexacosanoyl-CoA + oxidized [electron-transfer flavoprotein] + H(+) = (2E)-hexacosenoyl-CoA + reduced [electron-transfer flavoprotein]. It carries out the reaction tricosanoyl-CoA + oxidized [electron-transfer flavoprotein] + H(+) = (2E)-tricosenoyl-CoA + reduced [electron-transfer flavoprotein]. It functions in the pathway lipid metabolism; fatty acid beta-oxidation. Functionally, acyl-CoA dehydrogenase, that exhibits maximal activity towards saturated C22-CoA. Probably participates in beta-oxydation and energy production but could also play a role in the metabolism of specific fatty acids to control fatty acids composition of cellular lipids in brain. The chain is Acyl-CoA dehydrogenase family member 11 (Acad11) from Mus musculus (Mouse).